The chain runs to 224 residues: ATP synthase subunit a (224 aa).

6 helical membrane-spanning segments follow: residues Leu-17 to Leu-37, Ile-72 to Ile-92, Leu-99 to Ile-119, Met-125 to Ile-145, Gly-155 to Leu-175, and Tyr-184 to Val-204.

The protein belongs to the ATPase A chain family. As to quaternary structure, F-type ATPases have 2 components, CF(1) - the catalytic core - and CF(0) - the membrane proton channel. CF(1) has five subunits: alpha(3), beta(3), gamma(1), delta(1), epsilon(1). CF(0) has three main subunits: a, b and c.

Its subcellular location is the mitochondrion inner membrane. Mitochondrial membrane ATP synthase (F(1)F(0) ATP synthase or Complex V) produces ATP from ADP in the presence of a proton gradient across the membrane which is generated by electron transport complexes of the respiratory chain. F-type ATPases consist of two structural domains, F(1) - containing the extramembraneous catalytic core and F(0) - containing the membrane proton channel, linked together by a central stalk and a peripheral stalk. During catalysis, ATP synthesis in the catalytic domain of F(1) is coupled via a rotary mechanism of the central stalk subunits to proton translocation. Key component of the proton channel; it may play a direct role in the translocation of protons across the membrane. This chain is ATP synthase subunit a (mt:ATPase6), found in Drosophila yakuba (Fruit fly).